Consider the following 327-residue polypeptide: Ribose-phosphate pyrophosphokinase (327 aa).

Residues 40 to 42 (DGE) and 99 to 100 (RQ) contribute to the ATP site. Mg(2+)-binding residues include histidine 134 and aspartate 173. Lysine 196 is an active-site residue. Residues arginine 198, aspartate 222, and 226 to 230 (DTANT) contribute to the D-ribose 5-phosphate site.

The protein belongs to the ribose-phosphate pyrophosphokinase family. Class I subfamily. Homohexamer. Mg(2+) serves as cofactor.

The protein resides in the cytoplasm. It catalyses the reaction D-ribose 5-phosphate + ATP = 5-phospho-alpha-D-ribose 1-diphosphate + AMP + H(+). The protein operates within metabolic intermediate biosynthesis; 5-phospho-alpha-D-ribose 1-diphosphate biosynthesis; 5-phospho-alpha-D-ribose 1-diphosphate from D-ribose 5-phosphate (route I): step 1/1. In terms of biological role, involved in the biosynthesis of the central metabolite phospho-alpha-D-ribosyl-1-pyrophosphate (PRPP) via the transfer of pyrophosphoryl group from ATP to 1-hydroxyl of ribose-5-phosphate (Rib-5-P). This is Ribose-phosphate pyrophosphokinase from Chromobacterium violaceum (strain ATCC 12472 / DSM 30191 / JCM 1249 / CCUG 213 / NBRC 12614 / NCIMB 9131 / NCTC 9757 / MK).